Consider the following 225-residue polypeptide: MSSLLEVMDLTKGYGSGETRVDVLKGINLTVAEGETIALVGASGTGKSTLLHIMGTLDRPTSGSVRFGGEDVFRLGDAALASFRNHSIGFVFQFHHLLPEFTALENVMMPLLIAGVKRSDAAAPARELLGEVGLAHRLTHKPGELSGGEQQRVAIARALVLSPKLLLADEPTGNLDMKTSDEVHETLERVHRKRGVTLVIVTHNEKLASYMGRTVRLVDGRVVAD.

The ABC transporter domain occupies 5–225 (LEVMDLTKGY…RLVDGRVVAD (221 aa)). Position 41–48 (41–48 (GASGTGKS)) interacts with ATP.

The protein belongs to the ABC transporter superfamily. Lipoprotein translocase (TC 3.A.1.125) family. The complex is composed of two ATP-binding proteins (LolD) and two transmembrane proteins (LolC and LolE).

The protein resides in the cell inner membrane. Part of the ABC transporter complex LolCDE involved in the translocation of mature outer membrane-directed lipoproteins, from the inner membrane to the periplasmic chaperone, LolA. Responsible for the formation of the LolA-lipoprotein complex in an ATP-dependent manner. The polypeptide is Lipoprotein-releasing system ATP-binding protein LolD (Geobacter metallireducens (strain ATCC 53774 / DSM 7210 / GS-15)).